The following is a 457-amino-acid chain: Multidrug resistance protein MdtK (457 aa).

12 consecutive transmembrane segments (helical) span residues 11–31 (LLAL…MGVV), 53–73 (IWLP…PIVA), 93–113 (WLAT…RFII), 127–147 (AIGF…YQVL), 160–180 (GMII…AFIY), 188–208 (LGGI…FLMM), 243–263 (LPVG…ALLV), 276–296 (IALN…IAAT), 316–336 (ITAL…SIIF), 357–377 (LMLF…GSGV), 387–407 (IFFI…YLLG), and 416–436 (MGPA…AIMM).

Belongs to the multi antimicrobial extrusion (MATE) (TC 2.A.66.1) family. MdtK subfamily.

It is found in the cell inner membrane. In terms of biological role, multidrug efflux pump that functions probably as a Na(+)/drug antiporter. In Proteus mirabilis (strain HI4320), this protein is Multidrug resistance protein MdtK.